The sequence spans 579 residues: uncharacterized protein (579 aa).

3 consecutive transmembrane segments (helical) span residues 173–193 (IAMG…GGLA), 196–216 (FVAA…MIGA), and 218–238 (YLGT…GFGA).

The protein belongs to the TMCO4 family.

The protein resides in the cytoplasm. The protein localises to the nucleus membrane. This is an uncharacterized protein from Schizosaccharomyces pombe (strain 972 / ATCC 24843) (Fission yeast).